Here is a 181-residue protein sequence, read N- to C-terminus: Endoribonuclease YbeY (181 aa).

Residues histidine 115, histidine 119, and histidine 125 each coordinate Zn(2+).

Belongs to the endoribonuclease YbeY family. The cofactor is Zn(2+).

Its subcellular location is the cytoplasm. Its function is as follows. Single strand-specific metallo-endoribonuclease involved in late-stage 70S ribosome quality control and in maturation of the 3' terminus of the 16S rRNA. The sequence is that of Endoribonuclease YbeY from Bifidobacterium animalis subsp. lactis (strain AD011).